The sequence spans 257 residues: Uridylate kinase (257 aa).

Lys-8–Gly-11 contacts ATP. Residues Gly-21 to Gly-26 form an involved in allosteric activation by GTP region. Gly-56 is a binding site for UMP. ATP contacts are provided by Gly-57 and Arg-61. Residues Asp-75 and Asn-136–Thr-143 contribute to the UMP site. Positions 164, 170, and 173 each coordinate ATP.

Belongs to the UMP kinase family. Homohexamer.

The protein localises to the cytoplasm. It carries out the reaction UMP + ATP = UDP + ADP. Its pathway is pyrimidine metabolism; CTP biosynthesis via de novo pathway; UDP from UMP (UMPK route): step 1/1. Its activity is regulated as follows. Allosterically activated by GTP. Inhibited by UTP. Its function is as follows. Catalyzes the reversible phosphorylation of UMP to UDP. The polypeptide is Uridylate kinase (Deinococcus geothermalis (strain DSM 11300 / CIP 105573 / AG-3a)).